A 358-amino-acid polypeptide reads, in one-letter code: Trace amine-associated receptor 7e (358 aa).

Over 1-47 (MATDDASFPWDQDSILSRDLLSALSSQLCYENLNRSCIRSPYSPGPR) the chain is Extracellular. The N-linked (GlcNAc...) asparagine glycan is linked to Asn-34. 2 disulfide bridges follow: Cys-37–Cys-201 and Cys-120–Cys-205. The helical transmembrane segment at 48–68 (LILHAVFGFSAVLAVCGNLLV) threads the bilayer. The Cytoplasmic segment spans residues 69-83 (MTSILHFRQLHSPAN). The chain crosses the membrane as a helical span at residues 84–104 (FLVASLACADLLVGLTVMPFS). Topologically, residues 105–121 (MVRSVEGCWYFGDIYCK) are extracellular. Residues 122–143 (FHSSFDVSFCYSSIFHLCFISV) traverse the membrane as a helical segment. Residues 144–166 (DRYIAVSDPLIYLTRFTASVSGK) lie on the Cytoplasmic side of the membrane. A helical membrane pass occupies residues 167-187 (CITFSWFLSIIYSFSLLYTGA). The Extracellular segment spans residues 188-212 (SEAGLEDLVSALTCVGGCQLAVNQS). Residue Asn-210 is glycosylated (N-linked (GlcNAc...) asparagine). Residues 213-233 (WVFINFLLFLVPTLVMMTVYS) form a helical membrane-spanning segment. At 234–274 (KVFLIAKQQAQNIEKIGKQTARASESYKDRVAKRERKAAKT) the chain is on the cytoplasmic side. Residues 275–295 (LGITVAAFLLSWLPYFIDSII) form a helical membrane-spanning segment. The Extracellular segment spans residues 296–309 (DAFLGFITPTYVYE). The chain crosses the membrane as a helical span at residues 310–333 (ILVWIAYYNSAMNPLIYAFFYPWF). Over 334-358 (RKAIKLIVTGKILRENSSATNLFPE) the chain is Cytoplasmic.

This sequence belongs to the G-protein coupled receptor 1 family.

Its subcellular location is the cell membrane. Olfactory receptor specific for N,N-dimethylalkylamines trace amines. Trace amine compounds are enriched in animal body fluids and act on trace amine-associated receptors (TAARs) to elicit both intraspecific and interspecific innate behaviors. Ligand-binding causes a conformation change that triggers signaling via G(s)-class of G alpha proteins (GNAL or GNAS). The sequence is that of Trace amine-associated receptor 7e from Rattus norvegicus (Rat).